The chain runs to 138 residues: Large-conductance mechanosensitive channel (138 aa).

Transmembrane regions (helical) follow at residues 15 to 35 (VDLAIGVIIGGAFGGLVNSIV), 38 to 58 (IIMPIIGLITGGIDFSNMFIQ), and 80 to 100 (GNFITLLINFMIIAWVLFLVV).

It belongs to the MscL family. Homopentamer.

The protein resides in the cell inner membrane. Channel that opens in response to stretch forces in the membrane lipid bilayer. May participate in the regulation of osmotic pressure changes within the cell. The sequence is that of Large-conductance mechanosensitive channel from Brucella ovis (strain ATCC 25840 / 63/290 / NCTC 10512).